The primary structure comprises 569 residues: AP-4 complex accessory subunit Tepsin (569 aa).

Residues 8–141 (RDRLSFLHRL…FSDALPQPPS (134 aa)) form the ENTH domain. Positions 196-298 (VRPGPDNPCT…SGASREPGDL (103 aa)) are disordered. The span at 219–229 (VTPSASHTHPN) shows a compositional bias: polar residues. A compositionally biased stretch (low complexity) spans 260–292 (SSPSSQNSSCTSNLSRASDSVSRSGSDSHSGAS). The residue at position 400 (S400) is a Phosphoserine. A disordered region spans residues 467–524 (VPRSPVPTPSPDTLPPALQDPGELRTQLVCSSEPGTGSEQRLENTDTPKDSSSPCPWS). Over residues 470-480 (SPVPTPSPDTL) the composition is skewed to pro residues. Residues 494 to 505 (LVCSSEPGTGSE) show a composition bias toward polar residues. The segment covering 506–515 (QRLENTDTPK) has biased composition (basic and acidic residues). The interaction with AP4B1 stretch occupies residues 525 to 535 (PNSLFAGMELV). Residues 559–569 (SEPSAFAFLNM) form an interaction with AP4E1 region.

As to quaternary structure, interacts with AP4B1 and AP4E1; the interaction is direct and mediates the association of TEPSIN with the adapter-like complex 4 (AP-4), a heterotetramer composed of AP4B1, AP4E1, AP4M1 and AP4S1.

The protein localises to the golgi apparatus. Its subcellular location is the trans-Golgi network membrane. It is found in the cytoplasmic vesicle. The protein resides in the cytoplasm. It localises to the cytosol. Associates with the adapter-like complex 4 (AP-4) and may therefore play a role in vesicular trafficking of proteins at the trans-Golgi network. The protein is AP-4 complex accessory subunit Tepsin of Rattus norvegicus (Rat).